Reading from the N-terminus, the 528-residue chain is Low affinity inorganic phosphate transporter 4 (528 aa).

Topologically, residues 1-18 are cytoplasmic; that stretch reads MALEVLEALDSARTQWYH. The helical transmembrane segment at 19 to 39 threads the bilayer; sequence VTAIVIAGMGFFTDAYDLFCI. Topologically, residues 40–68 are extracellular; sequence TTVSKLLGRLYYFDPSTGKPGKLPNNVNN. Residues 69 to 89 form a helical membrane-spanning segment; it reads LVTGVALVGTLSGQLFFGYLG. The Cytoplasmic segment spans residues 90–96; the sequence is DKLGRKK. A helical membrane pass occupies residues 97 to 117; that stretch reads VYGVTLILMVACAICSGLSFG. At 118-122 the chain is on the extracellular side; sequence ASAKS. Residues 123–143 form a helical membrane-spanning segment; it reads VMGTLCFFRFWLGFGIGGDYP. The Cytoplasmic portion of the chain corresponds to 144 to 158; that stretch reads LSATIMSEYANKRTR. The helical transmembrane segment at 159 to 179 threads the bilayer; sequence GAFIAAVFAMQGVGIIFAGLV. The Extracellular segment spans residues 180–208; that stretch reads SMCLSAGFKASYHAPSFHDDPIMSTQPQG. The chain crosses the membrane as a helical span at residues 209–229; that stretch reads DLMWRLVLMIGAVPAAMTYYW. The Cytoplasmic segment spans residues 230 to 292; that stretch reads RMKMPETGRY…NEFFTRHGRH (63 aa). The helical transmembrane segment at 293-313 threads the bilayer; that stretch reads LIGTMTSWFLLDIAFYSQNLT. Topologically, residues 314 to 341 are extracellular; it reads QKDIFPAMGLIDKDFEMNAIQEVFETSR. A helical membrane pass occupies residues 342-362; the sequence is AMFVIALFGTFPGYWFTVFFI. At 363-371 the chain is on the cytoplasmic side; sequence EKLGRYKIQ. Residues 372-392 traverse the membrane as a helical segment; that stretch reads LIGFFMMSVFMFIIGVKYDYL. Residues 393–401 are Extracellular-facing; it reads RNENSHMFA. Residues 402 to 422 traverse the membrane as a helical segment; that stretch reads LLYGLTFFFANFGPNSTTFVL. Over 423 to 433 the chain is Cytoplasmic; sequence PAELFPTRVRS. Residues 434 to 454 form a helical membrane-spanning segment; sequence TCHALSAAAGKAGAMVGAFGI. Topologically, residues 455–467 are extracellular; it reads QNYTQKGEQKQIK. Residue Asn456 is glycosylated (N-linked (GlcNAc...) asparagine). The helical transmembrane segment at 468–488 threads the bilayer; that stretch reads HAMMILAVTNLIGFFCSFLVT. Topologically, residues 489 to 528 are cytoplasmic; that stretch reads ETKGRSLEEISGEDGRESELTPTPPNNRVPTRQEPRSETM. Basic and acidic residues-rich tracts occupy residues 496–507 and 519–528; these read EEISGEDGRESE and TRQEPRSETM. The segment at 496 to 528 is disordered; that stretch reads EEISGEDGRESELTPTPPNNRVPTRQEPRSETM.

The protein belongs to the major facilitator superfamily. Phosphate:H(+) symporter (TC 2.A.1.9) family. In terms of tissue distribution, expressed only in mycorrhizal roots, exclusively in cortical cells containing arbuscules, upon arbuscular mycorrhizal (AM) symbiosis with AM fungi (e.g. Gigaspora margarita and Funnelliformis mosseae). Also observed in root tips of non-mycorrhizal roots, in a phosphate (Pi) depended-manner, highest expression levels being observed in low Pi conditions.

It localises to the cell membrane. The catalysed reaction is phosphate(in) + H(+)(in) = phosphate(out) + H(+)(out). In terms of biological role, low-affinity transporter for external inorganic phosphate (Pi) probably involved in the acquisition of phosphate released by arbuscular mycorrhizal (AM) fungi (e.g. Gigaspora margarita and Funnelliformis mosseae) during AM symbiosis; required for propper mycorrhizal arbuscule morphology. Acts as a Pi-sensing machinery at the root tip level, independently of AM fungi, involved in the regulation of early root branching and lateral roots formation. The sequence is that of Low affinity inorganic phosphate transporter 4 from Lotus japonicus (Lotus corniculatus var. japonicus).